We begin with the raw amino-acid sequence, 85 residues long: Sec-independent protein translocase protein TatA (85 aa).

A helical transmembrane segment spans residues M1 to G21. Residues F39 to H85 form a disordered region.

This sequence belongs to the TatA/E family. In terms of assembly, the Tat system comprises two distinct complexes: a TatABC complex, containing multiple copies of TatA, TatB and TatC subunits, and a separate TatA complex, containing only TatA subunits. Substrates initially bind to the TatABC complex, which probably triggers association of the separate TatA complex to form the active translocon.

It localises to the cell inner membrane. Part of the twin-arginine translocation (Tat) system that transports large folded proteins containing a characteristic twin-arginine motif in their signal peptide across membranes. TatA could form the protein-conducting channel of the Tat system. The chain is Sec-independent protein translocase protein TatA from Rhizorhabdus wittichii (strain DSM 6014 / CCUG 31198 / JCM 15750 / NBRC 105917 / EY 4224 / RW1) (Sphingomonas wittichii).